Consider the following 263-residue polypeptide: Putative TATA-binding protein pB263R (263 aa).

Belongs to the asfivirus B263R family.

Its function is as follows. Putative TATA-binding protein. The chain is Putative TATA-binding protein pB263R from Ornithodoros (relapsing fever ticks).